The following is a 568-amino-acid chain: Protein downstream neighbor of son homolog (568 aa).

Disordered regions lie at residues 28-48 and 311-355; these read NKLAARVSNNNNRRPRHQVDE and MPLK…DDDE. Over residues 315–335 the composition is skewed to polar residues; it reads SDNSGNAHDNSFNEESTTTSL.

The protein belongs to the DONSON family. As to expression, expression peaks during late G1 and S phase (at protein level).

It localises to the nucleus. In terms of biological role, essential for DNA amplification in the ovary and required for cell proliferation during development. The protein is Protein downstream neighbor of son homolog (hd) of Drosophila melanogaster (Fruit fly).